The primary structure comprises 356 residues: Phosphate acyltransferase (356 aa).

This sequence belongs to the PlsX family. Homodimer. Probably interacts with PlsY.

The protein localises to the cytoplasm. The catalysed reaction is a fatty acyl-[ACP] + phosphate = an acyl phosphate + holo-[ACP]. The protein operates within lipid metabolism; phospholipid metabolism. Its function is as follows. Catalyzes the reversible formation of acyl-phosphate (acyl-PO(4)) from acyl-[acyl-carrier-protein] (acyl-ACP). This enzyme utilizes acyl-ACP as fatty acyl donor, but not acyl-CoA. This Xanthobacter autotrophicus (strain ATCC BAA-1158 / Py2) protein is Phosphate acyltransferase.